The sequence spans 359 residues: Histidinol-phosphate aminotransferase (359 aa).

Lys217 carries the post-translational modification N6-(pyridoxal phosphate)lysine.

Belongs to the class-II pyridoxal-phosphate-dependent aminotransferase family. Histidinol-phosphate aminotransferase subfamily. Homodimer. The cofactor is pyridoxal 5'-phosphate.

It catalyses the reaction L-histidinol phosphate + 2-oxoglutarate = 3-(imidazol-4-yl)-2-oxopropyl phosphate + L-glutamate. It participates in amino-acid biosynthesis; L-histidine biosynthesis; L-histidine from 5-phospho-alpha-D-ribose 1-diphosphate: step 7/9. In Salmonella heidelberg (strain SL476), this protein is Histidinol-phosphate aminotransferase.